Here is a 265-residue protein sequence, read N- to C-terminus: Urease accessory protein UreH (265 aa).

This sequence belongs to the UreD family. UreH, UreF and UreG form a complex that acts as a GTP-hydrolysis-dependent molecular chaperone, activating the urease apoprotein by helping to assemble the nickel containing metallocenter of UreC. The UreE protein probably delivers the nickel.

It is found in the cytoplasm. Functionally, required for maturation of urease via the functional incorporation of the urease nickel metallocenter. In Helicobacter pylori (strain HPAG1), this protein is Urease accessory protein UreH.